Here is a 649-residue protein sequence, read N- to C-terminus: DNA mismatch repair protein MutL (649 aa).

It belongs to the DNA mismatch repair MutL/HexB family.

Its function is as follows. This protein is involved in the repair of mismatches in DNA. It is required for dam-dependent methyl-directed DNA mismatch repair. May act as a 'molecular matchmaker', a protein that promotes the formation of a stable complex between two or more DNA-binding proteins in an ATP-dependent manner without itself being part of a final effector complex. The protein is DNA mismatch repair protein MutL of Streptococcus pneumoniae serotype 19F (strain G54).